The sequence spans 467 residues: tRNA-2-methylthio-N(6)-dimethylallyladenosine synthase (467 aa).

The disordered stretch occupies residues 1–20; it reads MSDDTTQIEPAMAQETSPRA. The region spanning 23–143 is the MTTase N-terminal domain; the sequence is RKVFVKTYGC…LPNALARVRG (121 aa). Residues Cys-32, Cys-68, Cys-106, Cys-184, Cys-188, and Cys-191 each coordinate [4Fe-4S] cluster. A Radical SAM core domain is found at 170-402; the sequence is RKRGVSAFLT…QALLSAQQYA (233 aa). One can recognise a TRAM domain in the interval 405 to 467; that stretch reads DSMIGRKMDV…TNSLIAQKLA (63 aa).

Belongs to the methylthiotransferase family. MiaB subfamily. In terms of assembly, monomer. The cofactor is [4Fe-4S] cluster.

The protein localises to the cytoplasm. The enzyme catalyses N(6)-dimethylallyladenosine(37) in tRNA + (sulfur carrier)-SH + AH2 + 2 S-adenosyl-L-methionine = 2-methylsulfanyl-N(6)-dimethylallyladenosine(37) in tRNA + (sulfur carrier)-H + 5'-deoxyadenosine + L-methionine + A + S-adenosyl-L-homocysteine + 2 H(+). In terms of biological role, catalyzes the methylthiolation of N6-(dimethylallyl)adenosine (i(6)A), leading to the formation of 2-methylthio-N6-(dimethylallyl)adenosine (ms(2)i(6)A) at position 37 in tRNAs that read codons beginning with uridine. The protein is tRNA-2-methylthio-N(6)-dimethylallyladenosine synthase of Brucella abortus (strain S19).